Here is a 5635-residue protein sequence, read N- to C-terminus: Hemicentin-1 (5635 aa).

Positions 1 to 21 (MISWEVVHTVFLFALLYSSLA) are cleaved as a signal peptide. The 176-residue stretch at 41–216 (TLAFVFDVTG…EVLKWVEEAV (176 aa)) folds into the VWFA domain. N-linked (GlcNAc...) asparagine glycosylation is found at asparagine 349 and asparagine 390. 44 Ig-like C2-type domains span residues 431 to 517 (PKVT…FDVS), 520 to 607 (PPVI…VFLT), 612 to 697 (PKVT…STLR), 702 to 788 (PKLM…ITLD), 793 to 883 (PVFI…TTVT), 890 to 976 (PLIG…TSVV), 981 to 1067 (PTIQ…VQLT), 1072 to 1166 (PRVF…VKLN), 1171 to 1255 (PKIQ…TEIT), 1262 to 1354 (PTVE…YNLK), 1358 to 1447 (PPVI…FNID), 1452 to 1541 (PTII…IKLT), 1546 to 1634 (PSIK…FHVD), 1638 to 1724 (PPMI…KEIK), 1733 to 1821 (PAIE…FEVT), 1826 to 1914 (PTIK…IQLH), 1919 to 2007 (PSLE…YSLQ), 2012 to 2097 (PSIS…RDID), 2104 to 2190 (PNIM…YNVN), 2195 to 2285 (PNIG…YNLQ), 2290 to 2379 (PTIT…YDLS), 2384 to 2470 (PSII…RKIF), 2478 to 2564 (PHIV…RSFS), 2571 to 2662 (PTIA…YEVK), 2666 to 2763 (PPII…VNIQ), 2766 to 2864 (PSFQ…YDVR), 2868 to 2959 (PPII…FNLN), 2964 to 3051 (PSVI…FSLT), 3056 to 3146 (PSIK…FHLN), 3151 to 3240 (PSIE…YFLS), 3245 to 3335 (PSVA…FNLN), 3340 to 3429 (PTIR…YNLQ), 3434 to 3516 (PNMD…GEVS), 3527 to 3615 (PHIN…YLVR), 3620 to 3708 (PNIA…FILT), 3713 to 3797 (PNIK…RRID), 3804 to 3892 (PSIA…VDLT), 3897 to 3983 (PSIA…VTLH), 3988 to 4076 (PVIQ…LNVQ), 4079 to 4164 (PVIS…TKLT), 4169 to 4255 (PRIR…VSLT), 4260 to 4344 (PTFT…GFVY), 4348 to 4435 (PPVF…MSLT), and 4440 to 4527 (PIIT…VIVQ). A disulfide bridge connects residues cysteine 451 and cysteine 499. Asparagine 528, asparagine 550, asparagine 573, and asparagine 620 each carry an N-linked (GlcNAc...) asparagine glycan. Cysteine 541 and cysteine 591 are oxidised to a cystine. Cysteine 633 and cysteine 681 form a disulfide bridge. The N-linked (GlcNAc...) asparagine glycan is linked to asparagine 693. The cysteines at positions 723 and 772 are disulfide-linked. A glycan (N-linked (GlcNAc...) asparagine) is linked at asparagine 809. 2 disulfides stabilise this stretch: cysteine 814–cysteine 867 and cysteine 911–cysteine 960. N-linked (GlcNAc...) asparagine glycosylation is present at asparagine 970. Intrachain disulfides connect cysteine 1002-cysteine 1051 and cysteine 1101-cysteine 1150. N-linked (GlcNAc...) asparagine glycosylation occurs at asparagine 1158. Cysteine 1192 and cysteine 1241 are disulfide-bonded. Asparagine 1272 carries an N-linked (GlcNAc...) asparagine glycan. Cysteines 1288 and 1338 form a disulfide. N-linked (GlcNAc...) asparagine glycosylation occurs at asparagine 1369. Intrachain disulfides connect cysteine 1382–cysteine 1431 and cysteine 1475–cysteine 1525. Asparagine 1552 is a glycosylation site (N-linked (GlcNAc...) asparagine). 4 disulfide bridges follow: cysteine 1569/cysteine 1618, cysteine 1663/cysteine 1712, cysteine 1756/cysteine 1805, and cysteine 1848/cysteine 1898. Residue asparagine 1929 is glycosylated (N-linked (GlcNAc...) asparagine). 2 disulfides stabilise this stretch: cysteine 1942-cysteine 1991 and cysteine 2033-cysteine 2083. N-linked (GlcNAc...) asparagine glycosylation is found at asparagine 2112 and asparagine 2155. 3 disulfides stabilise this stretch: cysteine 2125-cysteine 2174, cysteine 2218-cysteine 2269, and cysteine 2314-cysteine 2363. Asparagine 2395 carries N-linked (GlcNAc...) asparagine glycosylation. Disulfide bonds link cysteine 2408-cysteine 2457, cysteine 2501-cysteine 2550, and cysteine 2597-cysteine 2646. Residue asparagine 2689 is glycosylated (N-linked (GlcNAc...) asparagine). 2 cysteine pairs are disulfide-bonded: cysteine 2696–cysteine 2745 and cysteine 2799–cysteine 2848. Asparagine 2887 carries an N-linked (GlcNAc...) asparagine glycan. A disulfide bridge links cysteine 2894 with cysteine 2943. A glycan (N-linked (GlcNAc...) asparagine) is linked at asparagine 2973. Cystine bridges form between cysteine 2986–cysteine 3035, cysteine 3081–cysteine 3130, cysteine 3173–cysteine 3224, cysteine 3268–cysteine 3319, cysteine 3364–cysteine 3413, and cysteine 3457–cysteine 3506. 2 N-linked (GlcNAc...) asparagine glycosylation sites follow: asparagine 3221 and asparagine 3300. N-linked (GlcNAc...) asparagine glycosylation is present at asparagine 3530. Disulfide bonds link cysteine 3550-cysteine 3599 and cysteine 3643-cysteine 3692. Asparagine 3689 and asparagine 3727 each carry an N-linked (GlcNAc...) asparagine glycan. Cysteine 3734 and cysteine 3783 are oxidised to a cystine. N-linked (GlcNAc...) asparagine glycosylation is present at asparagine 3812. 26 disulfide bridges follow: cysteine 3825–cysteine 3876, cysteine 3918–cysteine 3967, cysteine 4009–cysteine 4058, cysteine 4100–cysteine 4148, cysteine 4190–cysteine 4239, cysteine 4281–cysteine 4328, cysteine 4371–cysteine 4419, cysteine 4461–cysteine 4509, cysteine 4541–cysteine 4578, cysteine 4545–cysteine 4583, cysteine 4556–cysteine 4568, cysteine 4598–cysteine 4635, cysteine 4602–cysteine 4640, cysteine 4613–cysteine 4625, cysteine 4655–cysteine 4692, cysteine 4659–cysteine 4697, cysteine 4670–cysteine 4682, cysteine 4712–cysteine 4749, cysteine 4716–cysteine 4754, cysteine 4727–cysteine 4739, cysteine 4769–cysteine 4806, cysteine 4773–cysteine 4811, cysteine 4784–cysteine 4796, cysteine 4826–cysteine 4863, cysteine 4830–cysteine 4868, and cysteine 4841–cysteine 4853. Asparagine 4029 carries an N-linked (GlcNAc...) asparagine glycan. Residues asparagine 4401 and asparagine 4491 are each glycosylated (N-linked (GlcNAc...) asparagine). TSP type-1 domains lie at 4529–4584 (HGGF…KPCP), 4586–4641 (DGSW…RPCP), 4643–4698 (HGAW…RNCP), 4700–4755 (HGKW…DPCP), 4757–4812 (HGNW…DMCP), and 4814–4869 (DGSW…QACP). Asparagine 4606 carries N-linked (GlcNAc...) asparagine glycosylation. A Nidogen G2 beta-barrel domain is found at 4871 to 5093 (GPQRARGSVI…SKGDRSNQCP (223 aa)). N-linked (GlcNAc...) asparagine glycans are attached at residues asparagine 4894 and asparagine 5040. An EGF-like 1; calcium-binding domain is found at 5107–5146 (DEDECAAGNPCSHSCHNAMGTYYCSCPKGLTIAADGRTCQ). 3 disulfide bridges follow: cysteine 5111–cysteine 5121, cysteine 5117–cysteine 5130, and cysteine 5132–cysteine 5145. An EGF-like 2; calcium-binding domain is found at 5147–5191 (DIDECALGRHTCHAGQDCDNTIGSYRCVVRCGSGFRRTSDGLSCQ). Positions 5192-5229 (DINECQESSPCHQRCFNAIGSFHCGCEPGYQLKGRKCM) constitute an EGF-like 3; calcium-binding domain. Intrachain disulfides connect cysteine 5196/cysteine 5206, cysteine 5202/cysteine 5215, and cysteine 5217/cysteine 5228. An EGF-like 4; calcium-binding domain is found at 5230 to 5271 (DVNECRQNVCRPDQHCKNTRGGYKCIDLCPNGMTKAENGTCI). A glycan (N-linked (GlcNAc...) asparagine) is linked at asparagine 5267. The EGF-like 5; calcium-binding domain occupies 5272–5307 (DIDECKDGTHQCRYNQICENTRGSYRCVCPRGYRSQ). 8 cysteine pairs are disulfide-bonded: cysteine 5276-cysteine 5289, cysteine 5283-cysteine 5298, cysteine 5319-cysteine 5330, cysteine 5326-cysteine 5339, cysteine 5341-cysteine 5354, cysteine 5436-cysteine 5446, cysteine 5442-cysteine 5455, and cysteine 5457-cysteine 5470. The EGF-like 6; calcium-binding domain maps to 5315–5355 (DINECEQVPKPCAHQCSNTPGSFKCICPPGQHLLGDGKSCA). Residues 5432-5471 (DIDECENTDACQHECKNTFGSYQCICPPGYQLTHNGKTCQ) enclose the EGF-like 7; calcium-binding domain. Asparagine 5615 carries N-linked (GlcNAc...) asparagine glycosylation.

In terms of tissue distribution, expressed in hair follicles and in the dermis (at protein level). As to expression, expressed in skin fibroblasts and retinal pigment epithelium (RPE) cells.

It localises to the secreted. It is found in the extracellular space. The protein localises to the extracellular matrix. The protein resides in the basement membrane. Its subcellular location is the cytoplasm. It localises to the cell junction. It is found in the cleavage furrow. In terms of biological role, involved in transforming growth factor beta-mediated rearrangement of the podocyte cytoskeleton which includes reduction of F-actin fibers and broadening, flattening and elongation of podocytes. Plays a role in basement membrane organization. May promote cleavage furrow maturation during cytokinesis in preimplantation embryos. May play a role in the architecture of adhesive and flexible epithelial cell junctions. May play a role during myocardial remodeling by imparting an effect on cardiac fibroblast migration. The sequence is that of Hemicentin-1 (HMCN1) from Homo sapiens (Human).